The following is a 468-amino-acid chain: Putative amidase AmiC (468 aa).

Active-site charge relay system residues include K80 and S155. S179 (acyl-ester intermediate) is an active-site residue.

The protein belongs to the amidase family.

The enzyme catalyses a monocarboxylic acid amide + H2O = a monocarboxylate + NH4(+). In Mycobacterium leprae (strain TN), this protein is Putative amidase AmiC (amiC).